A 137-amino-acid polypeptide reads, in one-letter code: Peptide methionine sulfoxide reductase MsrB (137 aa).

The region spanning 7 to 129 (PTENIEKLTD…NSASLNFVDD (123 aa)) is the MsrB domain. Zn(2+) is bound by residues Cys46, Cys49, Cys95, and Cys98. Residue Cys118 is the Nucleophile of the active site.

This sequence belongs to the MsrB Met sulfoxide reductase family. It depends on Zn(2+) as a cofactor.

It catalyses the reaction L-methionyl-[protein] + [thioredoxin]-disulfide + H2O = L-methionyl-(R)-S-oxide-[protein] + [thioredoxin]-dithiol. In Yersinia enterocolitica serotype O:8 / biotype 1B (strain NCTC 13174 / 8081), this protein is Peptide methionine sulfoxide reductase MsrB.